Here is a 291-residue protein sequence, read N- to C-terminus: Tyrosine-protein kinase PtkA (291 aa).

The tract at residues 1–79 is disordered; that stretch reads MSSPRERRPA…RRASSPGESP (79 aa). A compositionally biased stretch (polar residues) spans 23-60; that stretch reads HQTSRSSPDTTAPTGSGLSNRFVNDNGIVTDTTASGTN. Residue tyrosine 262 is modified to Phosphotyrosine.

Belongs to the HAD-like hydrolase superfamily. CbbY/CbbZ/Gph/YieH family. As to quaternary structure, interacts with PtpA. Post-translationally, autophosphorylated.

It catalyses the reaction L-tyrosyl-[protein] + ATP = O-phospho-L-tyrosyl-[protein] + ADP + H(+). In terms of biological role, required for growth within macrophages. Catalyzes the phosphorylation of PtpA on the tyrosine residues at positions 128 and 129, thereby increasing PtpA phosphatase activity and promoting pathogenicity. This chain is Tyrosine-protein kinase PtkA, found in Mycobacterium bovis (strain ATCC BAA-935 / AF2122/97).